The primary structure comprises 507 residues: Keratin, type II cuticular Hb5 (507 aa).

A head region spans residues 1-123 (MSCRSYRISS…PNAQCVKQEE (123 aa)). The IF rod domain maps to 123-434 (EKEQIKSLNS…RLLEGEEHRL (312 aa)). Residues 124 to 158 (KEQIKSLNSRFAAFIDKVRFLEQQNKLLETKWQFY) form a coil 1A region. Positions 159-168 (QNQRCCESNL) are linker 1. The tract at residues 169 to 269 (EPLFSGYIET…YEEEIRVLQA (101 aa)) is coil 1B. Lysine 229 is covalently cross-linked (Glycyl lysine isopeptide (Lys-Gly) (interchain with G-Cter in SUMO1)). A linker 12 region spans residues 270 to 286 (HISDTSVIVKMDNSRDL). The interval 287–430 (NMDCIIAEIK…ATYRRLLEGE (144 aa)) is coil 2. The tract at residues 431 to 507 (EHRLCEGVGS…CGSSRSVRFA (77 aa)) is tail.

This sequence belongs to the intermediate filament family. In terms of assembly, heterotetramer of two type I and two type II keratins. In terms of tissue distribution, synthesis occurs immediately above a small population of matrix cells at the base of the hair bulb and the trichocytes lining the dermal papilla and extends upward through the matrix and ends in the lower part of the cortex of the hair shaft.

The polypeptide is Keratin, type II cuticular Hb5 (KRT85) (Homo sapiens (Human)).